The primary structure comprises 807 residues: 85/88 kDa calcium-independent phospholipase A2 (807 aa).

Ser-13 is modified (phosphoserine). ANK repeat units lie at residues 120 to 147 (WTVTHLAVELGIRECFHHSRIISCANST), 151 to 181 (EGCTPLHLACRKGDSEILVELVQYCHAQMDV), 185 to 215 (KGETAFHYAVQGDNPQVLQLLGKNASAGLNQ), 219 to 248 (QGLTPLHLACQMGKQEMVRVLLLCNARCNI), 251 to 281 (PGGFPIHTAMKFSQKGCAEMIISMDSNQIHS), 286 to 312 (YGASPLHWAKNAEMARMLLKRGCDVDS), 316 to 345 (SGNTALHVAVTRNRFDCVMVLLTYGANAGA), 349 to 378 (HGNTPLHLAMSKDNMEMVKALIVFGAEVDT), and 382 to 403 (FGETPAFIASKISKLITRKALL). A run of 2 helical transmembrane segments spans residues 481-501 (LLCLDGGGVKGLVIIQLLIAI) and 512-532 (LFDWVAGTSTGGILALAILHS). The PNPLA domain occupies 482 to 666 (LCLDGGGVKG…LANNPTLDAM (185 aa)). The GXGXXG signature appears at 486–491 (GGGVKG). The short motif at 518–522 (GTSTG) is the GXSXG element. Ser-520 serves as the catalytic Nucleophile. Catalysis depends on Asp-653, which acts as the Proton acceptor. The DGA/G motif lies at 653–655 (DGG). The calmodulin-binding (1-9-14 motif) stretch occupies residues 678–687 (RKGQGNKVKK). The tract at residues 749–760 (AWCEMVGIQYFR) is calmodulin-binding (IQ motif).

In terms of assembly, homodimer formed by catalytic domains tightly interacting through a large hydrophobic interface. The contact area involves 3 alpha helices, several loops and a part of the beta sheet from each monomer. Both active sites of the dimer are in close proximity adopting an open conformation that provide sufficient space for phospholipid access and favoring cooperativity in deacylation-reacylation reactions. Each monomer has 9 ankyrin repeats stacked side-by-side in an elongated structure oriented outwards from the catalytic core. As to expression, expressed in pancreatic beta-cells. Expressed in skeletal muscle (at protein level).

The protein localises to the cytoplasm. It is found in the cell membrane. It localises to the mitochondrion. The protein resides in the cell projection. Its subcellular location is the pseudopodium. It catalyses the reaction a 1,2-diacyl-sn-glycero-3-phosphocholine + H2O = a 1-acyl-sn-glycero-3-phosphocholine + a fatty acid + H(+). The enzyme catalyses a 1-O-alkyl-2-acyl-sn-glycero-3-phosphocholine + H2O = a 1-O-alkyl-sn-glycero-3-phosphocholine + a fatty acid + H(+). It carries out the reaction 1,2-dihexadecanoyl-sn-glycero-3-phosphocholine + H2O = 1-hexadecanoyl-sn-glycero-3-phosphocholine + hexadecanoate + H(+). The catalysed reaction is 1-hexadecanoyl-2-(9Z-octadecenoyl)-sn-glycero-3-phosphocholine + H2O = 1-hexadecanoyl-sn-glycero-3-phosphocholine + (9Z)-octadecenoate + H(+). It catalyses the reaction 1-hexadecanoyl-2-(9Z,12Z-octadecadienoyl)-sn-glycero-3-phosphocholine + H2O = (9Z,12Z)-octadecadienoate + 1-hexadecanoyl-sn-glycero-3-phosphocholine + H(+). The enzyme catalyses 1-hexadecanoyl-2-(5Z,8Z,11Z,14Z-eicosatetraenoyl)-sn-glycero-3-phosphocholine + H2O = 1-hexadecanoyl-sn-glycero-3-phosphocholine + (5Z,8Z,11Z,14Z)-eicosatetraenoate + H(+). It carries out the reaction 1-octadecanoyl-2-(5Z,8Z,11Z,14Z-eicosatetraenoyl)-sn-glycero-3-phosphocholine + H2O = 1-octadecanoyl-sn-glycero-3-phosphocholine + (5Z,8Z,11Z,14Z)-eicosatetraenoate + H(+). The catalysed reaction is 1-hexadecanoyl-2-(5Z,8Z,11Z,14Z-eicosatetraenoyl)-sn-glycero-3-phosphoethanolamine + H2O = 1-hexadecanoyl-sn-glycero-3-phosphoethanolamine + (5Z,8Z,11Z,14Z)-eicosatetraenoate + H(+). It catalyses the reaction 1,2-dihexadecanoyl-sn-glycero-3-phosphate + H2O = 1-hexadecanoyl-sn-glycero-3-phosphate + hexadecanoate + H(+). The enzyme catalyses a 1-acyl-sn-glycero-3-phosphocholine + H2O = sn-glycerol 3-phosphocholine + a fatty acid + H(+). It carries out the reaction 1-hexadecanoyl-sn-glycero-3-phosphocholine + H2O = sn-glycerol 3-phosphocholine + hexadecanoate + H(+). The catalysed reaction is 1-(5Z,8Z,11Z,14Z-eicosatetraenoyl)-sn-glycero-3-phosphocholine + H2O = sn-glycerol 3-phosphocholine + (5Z,8Z,11Z,14Z)-eicosatetraenoate + H(+). It catalyses the reaction 2-(5Z,8Z,11Z,14Z)-eicosatetraenoyl-sn-glycero-3-phosphocholine + H2O = sn-glycerol 3-phosphocholine + (5Z,8Z,11Z,14Z)-eicosatetraenoate + H(+). The enzyme catalyses 1-O-hexadecyl-2-(5Z,8Z,11Z,14Z)-eicosatetraenoyl-sn-glycero-3-phosphocholine + H2O = 1-O-hexadecyl-sn-glycero-3-phosphocholine + (5Z,8Z,11Z,14Z)-eicosatetraenoate + H(+). It carries out the reaction 1-O-hexadecyl-2-acetyl-sn-glycero-3-phosphocholine + H2O = 1-O-hexadecyl-sn-glycero-3-phosphocholine + acetate + H(+). The catalysed reaction is hexadecanoyl-CoA + H2O = hexadecanoate + CoA + H(+). It catalyses the reaction 1',3'-bis[1,2-di-(9Z-octadecenoyl)-sn-glycero-3-phospho]-glycerol + H2O = 1'-[1,2-di-(9Z-octadecenoyl)-sn-glycero-3-phospho]-3'-[1-(9Z-octadecenoyl)-sn-glycero-3-phospho]-glycerol + (9Z)-octadecenoate + H(+). The enzyme catalyses 1'-[1,2-di-(9Z-octadecenoyl)-sn-glycero-3-phospho]-3'-[1-(9Z-octadecenoyl)-sn-glycero-3-phospho]-glycerol + H2O = 1',3'-bis-[1-(9Z-octadecenoyl)-sn-glycero-3-phospho]-glycerol + (9Z)-octadecenoate + H(+). It carries out the reaction 1',3'-bis-[1,2-di-(9Z,12Z-octadecadienoyl)-sn-glycero-3-phospho]-glycerol + H2O = 1'-[1,2-di-(9Z,12Z-octadecadienoyl)-sn-glycero-3-phospho]-3'-[1-(9Z,12Z-octadecadienoyl)-sn-glycero-3-phospho]-glycerol + (9Z,12Z)-octadecadienoate + H(+). The catalysed reaction is 1-octadecanoyl-2-(15-hydroxy-(5Z,8Z,11Z,13E)-eicosatetraenoyl)-sn-glycero-3-phosphoethanolamine + H2O = 1-octadecanoyl-sn-glycero-3-phosphoethanolamine + 15-hydroxy-(5Z,8Z,11Z,13E)-eicosatetraenoate + H(+). With respect to regulation, activated by ATP. Inhibited by calcium-activated calmodulin. Inhibited by bromoenol lactone (BEL). Its function is as follows. Calcium-independent phospholipase involved in phospholipid remodeling with implications in cellular membrane homeostasis, mitochondrial integrity and signal transduction. Hydrolyzes the ester bond of the fatty acyl group attached at sn-1 or sn-2 position of phospholipids (phospholipase A1 and A2 activity respectively), producing lysophospholipids that are used in deacylation-reacylation cycles. Hydrolyzes both saturated and unsaturated long fatty acyl chains in various glycerophospholipid classes such as phosphatidylcholines, phosphatidylethanolamines and phosphatidates, with a preference for hydrolysis at sn-2 position. Can further hydrolyze lysophospholipids carrying saturated fatty acyl chains (lysophospholipase activity). Upon oxidative stress, contributes to remodeling of mitochondrial phospholipids in pancreatic beta cells, in a repair mechanism to reduce oxidized lipid content. Preferentially hydrolyzes oxidized polyunsaturated fatty acyl chains from cardiolipins, yielding monolysocardiolipins that can be reacylated with unoxidized fatty acyls to regenerate native cardiolipin species. Hydrolyzes oxidized glycerophosphoethanolamines present in pancreatic islets, releasing oxidized polyunsaturated fatty acids such as hydroxyeicosatetraenoates (HETEs). Has thioesterase activity toward fatty-acyl CoA releasing CoA-SH known to facilitate fatty acid transport and beta-oxidation in mitochondria particularly in skeletal muscle. Plays a role in regulation of membrane dynamics and homeostasis. Selectively hydrolyzes sn-2 arachidonoyl group in plasmalogen phospholipids, structural components of lipid rafts and myelin. Regulates F-actin polymerization at the pseudopods, which is required for both speed and directionality of MCP1/CCL2-induced monocyte chemotaxis. Targets membrane phospholipids to produce potent lipid signaling messengers. Generates lysophosphatidate (LPA, 1-acyl-glycerol-3-phosphate), which acts via G-protein receptors in various cell types. Has phospholipase A2 activity toward platelet-activating factor (PAF, 1-O-alkyl-2-acetyl-sn-glycero-3-phosphocholine), likely playing a role in inactivation of this potent pro-inflammatory signaling lipid. In response to glucose, amplifies calcium influx in pancreatic beta cells to promote INS secretion. This is 85/88 kDa calcium-independent phospholipase A2 (Pla2g6) from Rattus norvegicus (Rat).